A 624-amino-acid polypeptide reads, in one-letter code: Chaperone protein HtpG (624 aa).

The a; substrate-binding stretch occupies residues 1–336 (MKGQETRGFQ…SNDLPLNVSR (336 aa)). The b stretch occupies residues 337–552 (EILQDSTVTR…ADEMSTQMAK (216 aa)). The interval 553-624 (LFAAAGQSVP…IRRMNQLLVS (72 aa)) is c.

It belongs to the heat shock protein 90 family. In terms of assembly, homodimer.

It localises to the cytoplasm. Its function is as follows. Molecular chaperone. Has ATPase activity. In Salmonella typhi, this protein is Chaperone protein HtpG.